The sequence spans 154 residues: Prefoldin subunit alpha (154 aa).

The interval 123 to 154 (EAEQLEQQAQQAQQQMMQQQMQAQQQPQDGEQ) is disordered. The segment covering 127–154 (LEQQAQQAQQQMMQQQMQAQQQPQDGEQ) has biased composition (low complexity).

The protein belongs to the prefoldin alpha subunit family. As to quaternary structure, heterohexamer of two alpha and four beta subunits.

The protein resides in the cytoplasm. Its function is as follows. Molecular chaperone capable of stabilizing a range of proteins. Seems to fulfill an ATP-independent, HSP70-like function in archaeal de novo protein folding. The chain is Prefoldin subunit alpha from Halobacterium salinarum (strain ATCC 29341 / DSM 671 / R1).